The primary structure comprises 438 residues: Glutamyl-tRNA reductase (438 aa).

Substrate-binding positions include 49–52, S109, 114–116, and Q120; these read TCNR and EGQ. C50 serves as the catalytic Nucleophile. 197 to 202 is a binding site for NADP(+); sequence GAGKMS.

This sequence belongs to the glutamyl-tRNA reductase family. As to quaternary structure, homodimer.

It catalyses the reaction (S)-4-amino-5-oxopentanoate + tRNA(Glu) + NADP(+) = L-glutamyl-tRNA(Glu) + NADPH + H(+). Its pathway is porphyrin-containing compound metabolism; protoporphyrin-IX biosynthesis; 5-aminolevulinate from L-glutamyl-tRNA(Glu): step 1/2. The protein operates within porphyrin-containing compound metabolism; chlorophyll biosynthesis. Catalyzes the NADPH-dependent reduction of glutamyl-tRNA(Glu) to glutamate 1-semialdehyde (GSA). This Synechococcus elongatus (strain ATCC 33912 / PCC 7942 / FACHB-805) (Anacystis nidulans R2) protein is Glutamyl-tRNA reductase.